The primary structure comprises 76 residues: ATP synthase subunit c (76 aa).

Helical transmembrane passes span 13–33 (LNVV…GILI) and 55–75 (FLGL…AFIF).

Belongs to the ATPase C chain family. F-type ATPases have 2 components, F(1) - the catalytic core - and F(0) - the membrane proton channel. F(1) has five subunits: alpha(3), beta(3), gamma(1), delta(1), epsilon(1). F(0) has three main subunits: a(1), b(2) and c(10-14). The alpha and beta chains form an alternating ring which encloses part of the gamma chain. F(1) is attached to F(0) by a central stalk formed by the gamma and epsilon chains, while a peripheral stalk is formed by the delta and b chains.

The protein localises to the cell membrane. F(1)F(0) ATP synthase produces ATP from ADP in the presence of a proton or sodium gradient. F-type ATPases consist of two structural domains, F(1) containing the extramembraneous catalytic core and F(0) containing the membrane proton channel, linked together by a central stalk and a peripheral stalk. During catalysis, ATP synthesis in the catalytic domain of F(1) is coupled via a rotary mechanism of the central stalk subunits to proton translocation. Its function is as follows. Key component of the F(0) channel; it plays a direct role in translocation across the membrane. A homomeric c-ring of between 10-14 subunits forms the central stalk rotor element with the F(1) delta and epsilon subunits. The chain is ATP synthase subunit c from Bifidobacterium animalis subsp. lactis (strain AD011).